A 305-amino-acid chain; its full sequence is Acetyl-coenzyme A carboxylase carboxyl transferase subunit beta (305 aa).

In terms of domain architecture, CoA carboxyltransferase N-terminal spans 25 to 293; sequence LWVQCPACQQ…LPKVESVASL (269 aa). Cys-29, Cys-32, Cys-48, and Cys-51 together coordinate Zn(2+). The C4-type zinc finger occupies 29-51; it reads CPACQQMIFARDLEKNQRVCTHC.

The protein belongs to the AccD/PCCB family. As to quaternary structure, acetyl-CoA carboxylase is a heterohexamer composed of biotin carboxyl carrier protein (AccB), biotin carboxylase (AccC) and two subunits each of ACCase subunit alpha (AccA) and ACCase subunit beta (AccD). Zn(2+) is required as a cofactor.

It is found in the cytoplasm. It carries out the reaction N(6)-carboxybiotinyl-L-lysyl-[protein] + acetyl-CoA = N(6)-biotinyl-L-lysyl-[protein] + malonyl-CoA. Its pathway is lipid metabolism; malonyl-CoA biosynthesis; malonyl-CoA from acetyl-CoA: step 1/1. Its function is as follows. Component of the acetyl coenzyme A carboxylase (ACC) complex. Biotin carboxylase (BC) catalyzes the carboxylation of biotin on its carrier protein (BCCP) and then the CO(2) group is transferred by the transcarboxylase to acetyl-CoA to form malonyl-CoA. The protein is Acetyl-coenzyme A carboxylase carboxyl transferase subunit beta of Granulibacter bethesdensis (strain ATCC BAA-1260 / CGDNIH1).